A 407-amino-acid chain; its full sequence is Peptidase T (407 aa).

H78 contributes to the Zn(2+) binding site. D80 is an active-site residue. D141 serves as a coordination point for Zn(2+). The Proton acceptor role is filled by E175. 3 residues coordinate Zn(2+): E176, D198, and H380.

This sequence belongs to the peptidase M20B family. Zn(2+) serves as cofactor.

It is found in the cytoplasm. The enzyme catalyses Release of the N-terminal residue from a tripeptide.. Functionally, cleaves the N-terminal amino acid of tripeptides. The chain is Peptidase T from Clostridium novyi (strain NT).